The following is a 276-amino-acid chain: Putative metal-binding protein TC_0696 (276 aa).

The N-terminal stretch at 1–18 is a signal peptide; sequence MRLLILLLFSFGIIYSHG. Positions 59, 121, 185, and 256 each coordinate a divalent metal cation.

It belongs to the bacterial solute-binding protein 9 family.

The protein resides in the periplasm. In terms of biological role, part of an ATP-binding cassette (ABC) transport system involved in metal import. Binds a metal with high affinity and specificity and delivers it to the membrane permease for translocation into the cytoplasm. This chain is Putative metal-binding protein TC_0696, found in Chlamydia muridarum (strain MoPn / Nigg).